The primary structure comprises 243 residues: Small ribosomal subunit protein eS4 (243 aa).

In terms of domain architecture, S4 RNA-binding spans 37 to 99; the sequence is IPLALLLKHY…SDLYFRIVPD (63 aa).

Belongs to the eukaryotic ribosomal protein eS4 family.

This chain is Small ribosomal subunit protein eS4 (rps4e), found in Sulfurisphaera tokodaii (strain DSM 16993 / JCM 10545 / NBRC 100140 / 7) (Sulfolobus tokodaii).